Reading from the N-terminus, the 398-residue chain is RNA-binding protein rnc1 (398 aa).

The tract at residues 40-78 is disordered; it reads KVSIPTPKPSTPLSTLTNGSTIQQSMTNQPEPTSQVPPI. Threonine 50 carries the phosphothreonine modification. The span at 57 to 76 shows a compositional bias: polar residues; it reads NGSTIQQSMTNQPEPTSQVP. KH domains lie at 93 to 157 and 178 to 243; these read QLTL…YRFI and PRKL…IWEI. Low complexity predominate over residues 274–290; that stretch reads ASTASPQQVSPPAAPST. The interval 274 to 295 is disordered; sequence ASTASPQQVSPPAAPSTTSGEA. The 66-residue stretch at 320–385 folds into the KH 3 domain; that stretch reads KVTQNISIPA…EENEKALFLL (66 aa).

Phosphorylated by pmk1. Phosphorylation causes enhancement of the RNA-binding activity.

It localises to the cytoplasm. Binds and stabilizes pmp1 mRNA and hence acts as a negative regulator of pmk1 signaling. Overexpression suppresses the Cl(-) sensitivity of calcineurin deletion. This chain is RNA-binding protein rnc1, found in Schizosaccharomyces pombe (strain 972 / ATCC 24843) (Fission yeast).